A 291-amino-acid polypeptide reads, in one-letter code: Cytosolic Fe-S cluster assembly factor CFD1 (291 aa).

24-31 is a binding site for ATP; the sequence is GKGGVGKS. Residues cysteine 199 and cysteine 202 each contribute to the [4Fe-4S] cluster site. Residues 270-291 are disordered; that stretch reads ENEEEAKETAEEEKSRAATNGQ. Positions 276-285 are enriched in basic and acidic residues; it reads KETAEEEKSR.

Belongs to the Mrp/NBP35 ATP-binding proteins family. NUBP2/CFD1 subfamily. In terms of assembly, heterotetramer of 2 NBP35 and 2 CFD1 chains. It depends on [4Fe-4S] cluster as a cofactor.

The protein localises to the cytoplasm. Component of the cytosolic iron-sulfur (Fe/S) protein assembly (CIA) machinery. Required for maturation of extramitochondrial Fe-S proteins. The NBP35-CFD1 heterotetramer forms a Fe-S scaffold complex, mediating the de novo assembly of an Fe-S cluster and its transfer to target apoproteins. Required for biogenesis and export of both ribosomal subunits, which may reflect a role in assembly of the Fe/S clusters in RLI1, a protein which performs rRNA processing and ribosome export. The chain is Cytosolic Fe-S cluster assembly factor CFD1 from Yarrowia lipolytica (strain CLIB 122 / E 150) (Yeast).